Here is a 263-residue protein sequence, read N- to C-terminus: ATP synthase subunit a (263 aa).

A propeptide spans 1–14 (MYLNNNNNMKYYIN) (removed in mature form). The next 6 membrane-spanning stretches (helical) occupy residues 35 to 57 (FSFI…ILTM), 95 to 117 (VWGY…NLIS), 129 to 151 (VVFV…FYTH), 156 to 178 (FGLF…IELL), 191 to 213 (LSAN…FNLM), and 228 to 250 (IAIL…VWCI).

It belongs to the ATPase A chain family. In terms of assembly, F-type ATPases have 2 components, CF(1) - the catalytic core - and CF(0) - the membrane proton channel. In yeast, the dimeric form of ATP synthase consists of 18 polypeptides: alpha, beta, gamma, delta, epsilon, 4 (B), 5 (OSCP), 6 (A), 8, 9 (C), d, E (Tim11), f, g, h, i, j and k.

It is found in the mitochondrion inner membrane. Its function is as follows. Mitochondrial membrane ATP synthase (F(1)F(0) ATP synthase or Complex V) produces ATP from ADP in the presence of a proton gradient across the membrane which is generated by electron transport complexes of the respiratory chain. F-type ATPases consist of two structural domains, F(1) - containing the extramembraneous catalytic core and F(0) - containing the membrane proton channel, linked together by a central stalk and a peripheral stalk. During catalysis, ATP synthesis in the catalytic domain of F(1) is coupled via a rotary mechanism of the central stalk subunits to proton translocation. Key component of the proton channel; it may play a direct role in the translocation of protons across the membrane. This is ATP synthase subunit a (ATP6) from Eremothecium gossypii (strain ATCC 10895 / CBS 109.51 / FGSC 9923 / NRRL Y-1056) (Yeast).